A 129-amino-acid polypeptide reads, in one-letter code: Small ribosomal subunit protein uS11 (129 aa).

This sequence belongs to the universal ribosomal protein uS11 family. In terms of assembly, part of the 30S ribosomal subunit. Interacts with proteins S7 and S18. Binds to IF-3.

Functionally, located on the platform of the 30S subunit, it bridges several disparate RNA helices of the 16S rRNA. Forms part of the Shine-Dalgarno cleft in the 70S ribosome. The polypeptide is Small ribosomal subunit protein uS11 (Lacticaseibacillus casei (strain BL23) (Lactobacillus casei)).